Reading from the N-terminus, the 147-residue chain is Large ribosomal subunit protein uL13 (147 aa).

The protein belongs to the universal ribosomal protein uL13 family. Part of the 50S ribosomal subunit.

In terms of biological role, this protein is one of the early assembly proteins of the 50S ribosomal subunit, although it is not seen to bind rRNA by itself. It is important during the early stages of 50S assembly. The sequence is that of Large ribosomal subunit protein uL13 from Levilactobacillus brevis (strain ATCC 367 / BCRC 12310 / CIP 105137 / JCM 1170 / LMG 11437 / NCIMB 947 / NCTC 947) (Lactobacillus brevis).